Here is a 41-residue protein sequence, read N- to C-terminus: Large ribosomal subunit protein bL36 (41 aa).

The protein belongs to the bacterial ribosomal protein bL36 family.

In Gluconacetobacter diazotrophicus (strain ATCC 49037 / DSM 5601 / CCUG 37298 / CIP 103539 / LMG 7603 / PAl5), this protein is Large ribosomal subunit protein bL36.